Here is a 201-residue protein sequence, read N- to C-terminus: Ribonuclease HII (201 aa).

One can recognise an RNase H type-2 domain in the interval 10 to 200 (LIEAGCDEAG…LGTDPQLEIP (191 aa)). A divalent metal cation-binding residues include Asp16, Glu17, and Asp108.

The protein belongs to the RNase HII family. The cofactor is Mn(2+). Mg(2+) is required as a cofactor.

It localises to the cytoplasm. The catalysed reaction is Endonucleolytic cleavage to 5'-phosphomonoester.. In terms of biological role, endonuclease that specifically degrades the RNA of RNA-DNA hybrids. In Phocaeicola vulgatus (strain ATCC 8482 / DSM 1447 / JCM 5826 / CCUG 4940 / NBRC 14291 / NCTC 11154) (Bacteroides vulgatus), this protein is Ribonuclease HII.